The chain runs to 177 residues: Basic form of pathogenesis-related protein 1 (177 aa).

The first 23 residues, 1–23 (MGFLTTIVACFITFAILIHSSKA), serve as a signal peptide directing secretion. Glutamine 24 is subject to Pyrrolidone carboxylic acid. The region spanning 31–147 (LNPHNAARRQ…NGWFFITCNY (117 aa)) is the SCP domain.

It belongs to the CRISP family. Two disulfide bonds are present.

Functionally, probably involved in the defense reaction of plants against pathogens. This chain is Basic form of pathogenesis-related protein 1, found in Nicotiana tabacum (Common tobacco).